The chain runs to 140 residues: Pro-vaccinia growth factor (140 aa).

A signal peptide spans 1 to 18 (MSMKYLMLLFAAMIIRSF). The Extracellular portion of the chain corresponds to 19–100 (ADSGNAIETT…SENPNTTTSY (82 aa)). N-linked (GlcNAc...) asparagine; by host glycosylation occurs at Asn34. Residues 41–81 (AIRLCGPEGDGYCLHGDCIHARDIDGMYCRCSHGYTGIRCQ) enclose the EGF-like domain. Intrachain disulfides connect Cys45-Cys58, Cys53-Cys69, and Cys71-Cys80. Asn95 is a glycosylation site (N-linked (GlcNAc...) asparagine; by host). Residues 101–121 (IPSPGIVLVLVGIIIITCCSL) traverse the membrane as a helical segment. Residues 122 to 140 (SVYRFTRRTKLPIQDMVVP) are Cytoplasmic-facing.

It belongs to the orthopoxvirus OPG019 family. As to quaternary structure, vaccinia growth factor interacts with host EGFR and promotes EGFR dimerization.

The protein resides in the host membrane. Its subcellular location is the secreted. Stimulates cellular proliferation (hyperplasia)and mobility around infected cells to promote rapid and efficient spread of infection. This effect is beneficial for virus replication in vivo, because poxviruses replicate possibly better in proliferating cells than in quiescent cells. Acts by binding host EGFR, inducing its dimerization, autophosphorylation and leading to activation of several cellular pathways regulating cell proliferation or cell survival. The activation by host EGFR of mitogen activated protein kinases (MAPK) and extracellular-signal regulated kinases (ERK) are essential for the positive effect of vaccinia growth factor on poxvirus virulence in vivo. The polypeptide is Pro-vaccinia growth factor (OPG019) (Vaccinia virus (strain L-IVP) (VACV)).